A 260-amino-acid chain; its full sequence is Protein SVS1 (260 aa).

Positions 1 to 19 (MIFKILCSLLLVTSNFASA) are cleaved as a signal peptide. N23, N249, and N256 each carry an N-linked (GlcNAc...) asparagine glycan.

Required for vanadate resistance. The polypeptide is Protein SVS1 (SVS1) (Saccharomyces cerevisiae (strain ATCC 204508 / S288c) (Baker's yeast)).